The following is a 166-amino-acid chain: NAD(P)H-quinone oxidoreductase subunit I, chloroplastic (166 aa).

2 consecutive 4Fe-4S ferredoxin-type domains span residues 55–84 (GRIHFEFDKCIACEVCVRVCPIDLPVVDWK) and 95–124 (LNYSIDFGICIFCGNCVEYCPTNCLSMTEE). Positions 64, 67, 70, 74, 104, 107, 110, and 114 each coordinate [4Fe-4S] cluster.

It belongs to the complex I 23 kDa subunit family. NDH is composed of at least 16 different subunits, 5 of which are encoded in the nucleus. Requires [4Fe-4S] cluster as cofactor.

It is found in the plastid. It localises to the chloroplast thylakoid membrane. It catalyses the reaction a plastoquinone + NADH + (n+1) H(+)(in) = a plastoquinol + NAD(+) + n H(+)(out). The enzyme catalyses a plastoquinone + NADPH + (n+1) H(+)(in) = a plastoquinol + NADP(+) + n H(+)(out). Functionally, NDH shuttles electrons from NAD(P)H:plastoquinone, via FMN and iron-sulfur (Fe-S) centers, to quinones in the photosynthetic chain and possibly in a chloroplast respiratory chain. The immediate electron acceptor for the enzyme in this species is believed to be plastoquinone. Couples the redox reaction to proton translocation, and thus conserves the redox energy in a proton gradient. In Tridax balbisioides (Coatbuttons), this protein is NAD(P)H-quinone oxidoreductase subunit I, chloroplastic.